Reading from the N-terminus, the 485-residue chain is CCA-adding enzyme (485 aa).

ATP is bound by residues Ser-53 and Arg-56. Residues Ser-53 and Arg-56 each coordinate CTP. The Mg(2+) site is built by Asp-65, Asp-67, and Asp-124. 3 residues coordinate ATP: His-146, Lys-164, and Tyr-173. Residues His-146, Lys-164, and Tyr-173 each coordinate CTP.

This sequence belongs to the tRNA nucleotidyltransferase/poly(A) polymerase family. Archaeal CCA-adding enzyme subfamily. As to quaternary structure, homodimer. The cofactor is Mg(2+).

The catalysed reaction is a tRNA precursor + 2 CTP + ATP = a tRNA with a 3' CCA end + 3 diphosphate. It catalyses the reaction a tRNA with a 3' CCA end + 2 CTP + ATP = a tRNA with a 3' CCACCA end + 3 diphosphate. Its function is as follows. Catalyzes the addition and repair of the essential 3'-terminal CCA sequence in tRNAs without using a nucleic acid template. Adds these three nucleotides in the order of C, C, and A to the tRNA nucleotide-73, using CTP and ATP as substrates and producing inorganic pyrophosphate. tRNA 3'-terminal CCA addition is required both for tRNA processing and repair. Also involved in tRNA surveillance by mediating tandem CCA addition to generate a CCACCA at the 3' terminus of unstable tRNAs. While stable tRNAs receive only 3'-terminal CCA, unstable tRNAs are marked with CCACCA and rapidly degraded. The polypeptide is CCA-adding enzyme (Methanopyrus kandleri (strain AV19 / DSM 6324 / JCM 9639 / NBRC 100938)).